An 807-amino-acid polypeptide reads, in one-letter code: Leucine--tRNA ligase (807 aa).

Residues 40-51 carry the 'HIGH' region motif; it reads PYPSGSGLHVGH. A 'KMSKS' region motif is present at residues 576 to 580; sequence KMSKS. K579 is a binding site for ATP.

It belongs to the class-I aminoacyl-tRNA synthetase family.

It localises to the cytoplasm. It carries out the reaction tRNA(Leu) + L-leucine + ATP = L-leucyl-tRNA(Leu) + AMP + diphosphate. This is Leucine--tRNA ligase from Chlorobaculum parvum (strain DSM 263 / NCIMB 8327) (Chlorobium vibrioforme subsp. thiosulfatophilum).